Reading from the N-terminus, the 431-residue chain is POU domain, class 2, transcription factor 3 (431 aa).

Disordered stretches follow at residues 1-39 (MVNLEPMHTEIKMSGDVADSTDTRSTFGQVEPGNDRNGL), 130-180 (LLPQ…EPTD), and 248-267 (DAESSPSDPSASTPSSYPTL). Positions 176–250 (DEPTDLEELE…LLEKWLNDAE (75 aa)) constitute a POU-specific domain. Residues 251–267 (SSPSDPSASTPSSYPTL) show a composition bias toward low complexity. Residues 274-333 (KRKKRTSIETNIRLTLEKRFQDNPKPSSEEISMIAEQLSMEKEVVRVWFCNRRQKEKRIN) constitute a DNA-binding region (homeobox). 3 stretches are compositionally biased toward low complexity: residues 352–364 (PSGSLGPLSVPPV), 374–390 (SSCSPGNNSRPSSPGSG), and 398–419 (ASQNNSKAAMNSSSSSSFNSSG). Residues 352–419 (PSGSLGPLSV…SSSSSFNSSG (68 aa)) are disordered.

The protein belongs to the POU transcription factor family. Class-2 subfamily. As to quaternary structure, interacts (via the POU domain) with POU2AF1 and POU2AF2 in a DNA-dependent manner; this interaction recruits POU2AF2 to chromatin and increases POU2F3 transactivation activity. As to expression, skin, thymus, stomach and testis.

The protein resides in the nucleus. Functionally, transcription factor that binds to the octamer motif (5'-ATTTGCAT-3'). Regulates cell type-specific differentiation pathways. Involved in the regulation of keratinocytes differentiation. The POU2F3-POU2AF2/POU2AF3 complex drives the expression of tuft-cell-specific genes, a rare chemosensory cells that coordinate immune and neural functions within mucosal epithelial tissues. The chain is POU domain, class 2, transcription factor 3 (Pou2f3) from Mus musculus (Mouse).